We begin with the raw amino-acid sequence, 403 residues long: 26S proteasome regulatory subunit 8 (403 aa).

Glycine 186–threonine 193 contributes to the ATP binding site.

This sequence belongs to the AAA ATPase family.

It is found in the cytoplasm. Its subcellular location is the nucleus. Functionally, the 26S proteasome is involved in the ATP-dependent degradation of ubiquitinated proteins. The regulatory (or ATPase) complex confers ATP dependency and substrate specificity to the 26S complex. The protein is 26S proteasome regulatory subunit 8 (psmC5) of Dictyostelium discoideum (Social amoeba).